We begin with the raw amino-acid sequence, 122 residues long: Acidic phospholipase A2 Tpu-E6b (122 aa).

7 cysteine pairs are disulfide-bonded: Cys-26-Cys-115, Cys-28-Cys-44, Cys-43-Cys-95, Cys-49-Cys-122, Cys-50-Cys-88, Cys-57-Cys-81, and Cys-75-Cys-86. Ca(2+) contacts are provided by Tyr-27, Gly-29, and Gly-31. Residue His-47 is part of the active site. Asp-48 is a Ca(2+) binding site. Asp-89 is a catalytic residue.

Monomer. The cofactor is Ca(2+). As to expression, expressed by the venom gland.

The protein localises to the secreted. The enzyme catalyses a 1,2-diacyl-sn-glycero-3-phosphocholine + H2O = a 1-acyl-sn-glycero-3-phosphocholine + a fatty acid + H(+). In terms of biological role, snake venom phospholipase A2 (PLA2) that weakly inhibits ADP-induced platelet aggregation when tested on platelet rich plasma from human and rabbit blood (15-25% of inhibition at 5-10 ug of enzyme). Exhibits moderate hydrolytic activities toward L-dipalmitoyl phosphatidylcholine. PLA2 catalyzes the calcium-dependent hydrolysis of the 2-acyl groups in 3-sn-phosphoglycerides. This chain is Acidic phospholipase A2 Tpu-E6b, found in Craspedocephalus puniceus (Flat-nosed pitviper).